A 366-amino-acid polypeptide reads, in one-letter code: Alanine racemase (366 aa).

K40 functions as the Proton acceptor; specific for D-alanine in the catalytic mechanism. N6-(pyridoxal phosphate)lysine is present on K40. R136 lines the substrate pocket. Residue Y263 is the Proton acceptor; specific for L-alanine of the active site. M310 is a binding site for substrate.

The protein belongs to the alanine racemase family. Requires pyridoxal 5'-phosphate as cofactor.

The catalysed reaction is L-alanine = D-alanine. It functions in the pathway amino-acid biosynthesis; D-alanine biosynthesis; D-alanine from L-alanine: step 1/1. In terms of biological role, catalyzes the interconversion of L-alanine and D-alanine. May also act on other amino acids. In Streptococcus pyogenes serotype M12 (strain MGAS2096), this protein is Alanine racemase (alr).